We begin with the raw amino-acid sequence, 291 residues long: Polyamine aminopropyltransferase (291 aa).

The 241-residue stretch at 5 to 245 folds into the PABS domain; sequence PGPVSLIEPL…YAVNYIIGSL (241 aa). Residue glutamine 36 coordinates S-methyl-5'-thioadenosine. Residues histidine 67 and glutamate 91 each coordinate spermidine. Residues aspartate 111 and 143-144 contribute to the S-methyl-5'-thioadenosine site; that span reads DG. The active-site Proton acceptor is aspartate 164.

It belongs to the spermidine/spermine synthase family. Homodimer or homotetramer.

The protein localises to the cytoplasm. It catalyses the reaction S-adenosyl 3-(methylsulfanyl)propylamine + putrescine = S-methyl-5'-thioadenosine + spermidine + H(+). Its pathway is amine and polyamine biosynthesis; spermidine biosynthesis; spermidine from putrescine: step 1/1. In terms of biological role, catalyzes the irreversible transfer of a propylamine group from the amino donor S-adenosylmethioninamine (decarboxy-AdoMet) to putrescine (1,4-diaminobutane) to yield spermidine. This Pyrobaculum islandicum (strain DSM 4184 / JCM 9189 / GEO3) protein is Polyamine aminopropyltransferase.